A 410-amino-acid polypeptide reads, in one-letter code: Proteasomal ubiquitin receptor ADRM1 (410 aa).

One can recognise a Pru domain in the interval 17-130; that stretch reads SSSKYLVEFR…RKVNEYLNNP (114 aa). At Ser18 the chain carries Phosphoserine. Over residues 191 to 257 the composition is skewed to low complexity; sequence GSGGPATSSS…PAAQTPSLPA (67 aa). 2 disordered regions span residues 191 to 264 and 381 to 410; these read GSGG…SSTQ and FAKA…MSLD. Residues 281-395 enclose the DEUBAD domain; sequence PAMPTEGSGV…EGSDSKTDDG (115 aa). Residues 381 to 401 show a composition bias toward basic and acidic residues; sequence FAKAMEGSDSKTDDGDSKDKK.

The protein belongs to the ADRM1 family. Component of the 19S proteasome regulatory particle complex. The 26S proteasome consists of a 20S core particle (CP) and two 19S regulatory subunits (RP).

It localises to the cytoplasm. The protein localises to the nucleus. Component of the 26S proteasome, a multiprotein complex involved in the ATP-dependent degradation of ubiquitinated proteins. This complex plays a key role in the maintenance of protein homeostasis by removing misfolded or damaged proteins, which could impair cellular functions, and by removing proteins whose functions are no longer required. Therefore, the proteasome participates in numerous cellular processes, including cell cycle progression, apoptosis, or DNA damage repair. Within the complex, functions as a proteasomal ubiquitin receptor. The chain is Proteasomal ubiquitin receptor ADRM1 (adrm1b) from Danio rerio (Zebrafish).